Reading from the N-terminus, the 125-residue chain is Methylglyoxal synthase (125 aa).

Residues 1 to 125 enclose the MGS-like domain; that stretch reads MTQRLRIALI…TAEKLVRALD (125 aa). Substrate contacts are provided by residues H12, K16, 38–41, and 59–60; these read TGTT and SG. D65 functions as the Proton donor/acceptor in the catalytic mechanism. Residue H92 participates in substrate binding.

The protein belongs to the methylglyoxal synthase family.

It catalyses the reaction dihydroxyacetone phosphate = methylglyoxal + phosphate. Functionally, catalyzes the formation of methylglyoxal from dihydroxyacetone phosphate. The sequence is that of Methylglyoxal synthase from Brucella abortus (strain S19).